The following is a 299-amino-acid chain: Lathosterol oxidase (299 aa).

The next 3 membrane-spanning stretches (helical) occupy residues 32–52 (VSLL…CATL), 79–99 (FTVK…LLEL), and 117–137 (IHLI…IYWI). The Fatty acid hydroxylase domain maps to 124–252 (ISFLFFTDML…YFTLWDRIGG (129 aa)). Residues 138 to 143 (HRGLHH) carry the Histidine box-1 motif. A Histidine box-2 motif is present at residues 151–155 (HKPHH). A Histidine box-3 motif is present at residues 228–233 (HHTDHH). The residue at position 253 (Ser-253) is a Phosphoserine.

It belongs to the sterol desaturase family. Fe cation is required as a cofactor.

The protein resides in the endoplasmic reticulum membrane. It catalyses the reaction a Delta(7)-sterol + 2 Fe(II)-[cytochrome b5] + O2 + 2 H(+) = a Delta(5),Delta(7)-sterol + 2 Fe(III)-[cytochrome b5] + 2 H2O. The enzyme catalyses lathosterol + 2 Fe(II)-[cytochrome b5] + O2 + 2 H(+) = 7-dehydrocholesterol + 2 Fe(III)-[cytochrome b5] + 2 H2O. It carries out the reaction 5alpha-cholesta-7,24-dien-3beta-ol + 2 Fe(II)-[cytochrome b5] + O2 + 2 H(+) = 7-dehydrodesmosterol + 2 Fe(III)-[cytochrome b5] + 2 H2O. The protein operates within steroid biosynthesis; cholesterol biosynthesis. Its function is as follows. Catalyzes the penultimate step of the biosynthesis of cholesterol, the dehydrogenation of lathosterol into 7-dehydrocholesterol (7-DHC). Cholesterol is the major sterol component in mammalian membranes and a precursor for bile acid and steroid hormone synthesis. In addition to its essential role in cholesterol biosynthesis, it also indirectly regulates ferroptosis through the production of 7-DHC. By diverting the spread of damage caused by peroxyl radicals from the phospholipid components to its sterol nucleus, 7-DHC prevents this form of cell death. The polypeptide is Lathosterol oxidase (Rattus norvegicus (Rat)).